The primary structure comprises 285 residues: Glutamate racemase (285 aa).

Residues 28–29 and 60–61 each bind substrate; these read DS and YG. Cys-92 functions as the Proton donor/acceptor in the catalytic mechanism. 93–94 is a binding site for substrate; it reads NT. Cys-204 functions as the Proton donor/acceptor in the catalytic mechanism. 205-206 contacts substrate; that stretch reads TH.

Belongs to the aspartate/glutamate racemases family.

The enzyme catalyses L-glutamate = D-glutamate. Its pathway is cell wall biogenesis; peptidoglycan biosynthesis. Functionally, provides the (R)-glutamate required for cell wall biosynthesis. The sequence is that of Glutamate racemase from Escherichia coli O7:K1 (strain IAI39 / ExPEC).